The sequence spans 196 residues: Imidazole glycerol phosphate synthase subunit HisH (196 aa).

In terms of domain architecture, Glutamine amidotransferase type-1 spans 2-196 (NVVIVDTECA…LKRFLELTLC (195 aa)). The active-site Nucleophile is cysteine 77. Residues histidine 175 and glutamate 177 contribute to the active site.

In terms of assembly, heterodimer of HisH and HisF.

The protein resides in the cytoplasm. It catalyses the reaction 5-[(5-phospho-1-deoxy-D-ribulos-1-ylimino)methylamino]-1-(5-phospho-beta-D-ribosyl)imidazole-4-carboxamide + L-glutamine = D-erythro-1-(imidazol-4-yl)glycerol 3-phosphate + 5-amino-1-(5-phospho-beta-D-ribosyl)imidazole-4-carboxamide + L-glutamate + H(+). The catalysed reaction is L-glutamine + H2O = L-glutamate + NH4(+). It functions in the pathway amino-acid biosynthesis; L-histidine biosynthesis; L-histidine from 5-phospho-alpha-D-ribose 1-diphosphate: step 5/9. Its function is as follows. IGPS catalyzes the conversion of PRFAR and glutamine to IGP, AICAR and glutamate. The HisH subunit catalyzes the hydrolysis of glutamine to glutamate and ammonia as part of the synthesis of IGP and AICAR. The resulting ammonia molecule is channeled to the active site of HisF. This is Imidazole glycerol phosphate synthase subunit HisH from Idiomarina loihiensis (strain ATCC BAA-735 / DSM 15497 / L2-TR).